A 59-amino-acid polypeptide reads, in one-letter code: Single-pass membrane and coiled-coil domain-containing protein 4 (59 aa).

The segment at 1-27 is disordered; the sequence is MRQLKGKPKKETSRDKKERKQAMQEAR. A compositionally biased stretch (basic and acidic residues) spans 9–27; the sequence is KKETSRDKKERKQAMQEAR. Residues 9-31 adopt a coiled-coil conformation; that stretch reads KKETSRDKKERKQAMQEARRQIT. Residues 32–52 traverse the membrane as a helical segment; sequence TVVLPTLAVVVLLIVVFVYVA.

The protein belongs to the SMCO4 family.

The protein resides in the membrane. The polypeptide is Single-pass membrane and coiled-coil domain-containing protein 4 (SMCO4) (Bos taurus (Bovine)).